Here is a 319-residue protein sequence, read N- to C-terminus: Transcription factor jun-1 (319 aa).

2 disordered regions span residues 1–52 (MEED…EKES) and 216–264 (NGVN…CRQK). The span at 8–19 (PPSSSTSSESPE) shows a compositional bias: low complexity. The span at 28–38 (PTRRRKNSKKD) shows a compositional bias: basic residues. Residues 244–285 (KKKLERKRARNRQAATKCRQKKMDRIKELEEQVLHEKHRGQR) form a basic motif region. Residues 244 to 307 (KKKLERKRAR…EHFRRTVEHH (64 aa)) form the bZIP domain. A leucine-zipper region spans residues 286–293 (LDAELLEL).

The protein belongs to the bZIP family. Jun subfamily. In terms of assembly, heterodimer; with fos-1. In terms of tissue distribution, isoform a, isoform b, isoform c and isoform d are expressed in the spermatheca.

It is found in the nucleus. In terms of biological role, transcription factor that recognizes and binds to the AP-1 non-canonical enhancer heptamer motif 5'-TTAGTCA-3'. Required for ovulation. Controls plc-1 expression in the spermatheca to regulate spermathecal valve dilation. The polypeptide is Transcription factor jun-1 (Caenorhabditis elegans).